We begin with the raw amino-acid sequence, 182 residues long: Translation initiation factor IF-3 (182 aa).

The protein belongs to the IF-3 family. As to quaternary structure, monomer.

It localises to the cytoplasm. IF-3 binds to the 30S ribosomal subunit and shifts the equilibrium between 70S ribosomes and their 50S and 30S subunits in favor of the free subunits, thus enhancing the availability of 30S subunits on which protein synthesis initiation begins. The protein is Translation initiation factor IF-3 of Tropheryma whipplei (strain TW08/27) (Whipple's bacillus).